The chain runs to 385 residues: Spindle pole component BBP1 (385 aa).

Position 29 is a phosphoserine (Ser-29). Basic and acidic residues predominate over residues 34 to 48; it reads YKDQEERRDRSRYAQ. The interval 34 to 76 is disordered; that stretch reads YKDQEERRDRSRYAQDDTNFSMKFGNDSNRRSTNLSRSNSWSG. The segment covering 64-75 has biased composition (low complexity); that stretch reads RSTNLSRSNSWS. A phosphoserine mark is found at Ser-73 and Ser-115. The stretch at 229–355 forms a coiled coil; the sequence is QMDLNSRDLE…KDMQRDNYES (127 aa).

It belongs to the BBP1 family. In terms of assembly, homodimer. Interacts with KAR1, MPS2 and SPC29.

Its subcellular location is the cytoplasm. The protein resides in the cytoskeleton. It localises to the microtubule organizing center. The protein localises to the spindle pole body. Functionally, component of the spindle pole body (SPB) required for insertion of the nascent SPB into the nuclear envelope and for the proper execution of spindle pole body (SPB) duplication. Connects the central plaque of the SPB with the half-bridge. Required for proper localization of CDC5 at the SPB and for proper M-phase progression. The polypeptide is Spindle pole component BBP1 (BBP1) (Saccharomyces cerevisiae (strain ATCC 204508 / S288c) (Baker's yeast)).